Reading from the N-terminus, the 613-residue chain is MSRFARLLLIVALFFTGAWAKTVKETLRITWKEGAPNGQARELIYTNGQFPSPTLVWDEDDDIEITVYNEMAKNVTVHWHGLDQKDTPWSDGTPGLSQRPIQPGNKFVYKFKASPPGNHWYHSHEKMSLVDGLYGAIHIRPKGDRTGLWSQISQDKDDIKAMENAAHDPEYLVVSDWSQYTSEEYWKISTDSGLLVFCLDSILVNGKGEVYCPGQKFLQAELAPGLVEDAFPPGTEVSDKGCFPADLDQVQGGPWNITKRPDLIPPRVQEGCVASRHENATIVVDPSRNNGWVSMHIVAAATIAQITFSVDSHEFWLYEIDGNYVNPRKFVSAVMSAGETFSVMIKLDQKPGRYTMRIPNSGASQVLGGFAEMVYKGCESEEKTGKAYLSYGGNPTSPDVEKNSFFPWQLDTDHMSPWPPNKPRPGNADEEHLLVLGRVGAPYNYTMNTKYLYPVDFQNDDPLLFYPNATRDTENDGLVLRTKNGSWVDLILQVSTLPGDTSSFEHFMHKHGSKTWRIGFGAGVWNYTSVEEAIKERPKDFNLETPGLRDTWITAFSIGGEAYWSVFRYFVDNPGPWLFHCHIELHLMGGMGIAILDGVDAWPEHIPEEYQLC.

Residues 1 to 20 form the signal peptide; that stretch reads MSRFARLLLIVALFFTGAWA. 2 consecutive Plastocyanin-like domains span residues 29–142 and 171–359; these read ITWK…IRPK and YLVV…MRIP. Asn74 carries N-linked (GlcNAc...) asparagine glycosylation. Residues His78, His80, His122, and His124 each coordinate Cu cation. N-linked (GlcNAc...) asparagine glycosylation is found at Asn256, Asn279, Asn444, Asn468, and Asn484. Residues 468–598 form the Plastocyanin-like 3 domain; that stretch reads NATRDTENDG…GGMGIAILDG (131 aa). 3 residues coordinate Cu cation: His506, His509, and His511. Asn526 carries N-linked (GlcNAc...) asparagine glycosylation. His580, Cys581, His582, and His586 together coordinate Cu cation.

Belongs to the multicopper oxidase family. Cu cation is required as a cofactor.

The protein localises to the cell surface. Its pathway is pigment biosynthesis. In terms of biological role, laccase; part of the Pks1 gene cluster that mediates the biosynthesis of an anthraquinone derivative pigment that contributes to conidial pigmentation that provides protection from UV radiation, heat and cold stress. The polyketide synthase Pks1 produces 1-acetyl-2,4,6,8-tetrahydroxy-9,10-anthraquinone though condensation of acetyl-CoA with malonyl-CoA. The dehydratase EthD and the laccase Mlac1 further convert the anthraquinone derivative into the final conidial pigment. This is Laccase 1 from Metarhizium guizhouense (strain ARSEF 977).